We begin with the raw amino-acid sequence, 469 residues long: 3-isopropylmalate dehydratase large subunit (469 aa).

Cysteine 347, cysteine 410, and cysteine 413 together coordinate [4Fe-4S] cluster.

Belongs to the aconitase/IPM isomerase family. LeuC type 1 subfamily. As to quaternary structure, heterodimer of LeuC and LeuD. The cofactor is [4Fe-4S] cluster.

It catalyses the reaction (2R,3S)-3-isopropylmalate = (2S)-2-isopropylmalate. Its pathway is amino-acid biosynthesis; L-leucine biosynthesis; L-leucine from 3-methyl-2-oxobutanoate: step 2/4. Functionally, catalyzes the isomerization between 2-isopropylmalate and 3-isopropylmalate, via the formation of 2-isopropylmaleate. This Burkholderia ambifaria (strain MC40-6) protein is 3-isopropylmalate dehydratase large subunit.